Reading from the N-terminus, the 110-residue chain is Co-chaperonin GroES (110 aa).

Belongs to the GroES chaperonin family. Heptamer of 7 subunits arranged in a ring. Interacts with the chaperonin GroEL.

It localises to the cytoplasm. Its function is as follows. Together with the chaperonin GroEL, plays an essential role in assisting protein folding. The GroEL-GroES system forms a nano-cage that allows encapsulation of the non-native substrate proteins and provides a physical environment optimized to promote and accelerate protein folding. GroES binds to the apical surface of the GroEL ring, thereby capping the opening of the GroEL channel. In Mycoplasma genitalium (strain ATCC 33530 / DSM 19775 / NCTC 10195 / G37) (Mycoplasmoides genitalium), this protein is Co-chaperonin GroES.